Reading from the N-terminus, the 264-residue chain is Transmembrane protein 270 (264 aa).

The next 3 membrane-spanning stretches (helical) occupy residues 31 to 51 (HLYR…LGLA), 74 to 94 (LSLA…LLLW), and 133 to 153 (LFLS…LLTW). The segment covering 227 to 236 (AQEVKSQETS) has biased composition (polar residues). Positions 227 to 264 (AQEVKSQETSGPPPQFLIPESSTTESGPLPPQPETPGE) are disordered. Over residues 254–264 (PLPPQPETPGE) the composition is skewed to pro residues.

Testis.

Its subcellular location is the membrane. The polypeptide is Transmembrane protein 270 (Mus musculus (Mouse)).